The following is a 474-amino-acid chain: MAYDDLRSFLDTLEKEGQLLRITDEVLPEPDLAAAANATGRIGENAPALHFDNVKGFTDARIAMNVHGSWANHALALGLPKNTPVKEQVEEFARRWDAFPVAPERREEAPWRENTQEGEDVDLFSVLPLFRLNDGDGGFYLDKAAVVSRDPEDRDDFGKQNVGTYRIQVIGTNRLAFHPAMHDVAQHLRKAEEKGEDLPIAITLGNDPVMAIVAGMPMAYDQSEYEMAGALRGAPAPIATAPLTGFDVPWGSEVVIEGVIESRKRRIEGPFGEFTGHYSGGRRMPVIRVERVSYRHEPVFESLYLGMPWNECDYLVGPNTCVPLLKQLRAEFPEVQAVNAMYTHGLMVIISTAKRYGGFAKAVGMRAMTTPHGLGYVAQVILVDEDVDPFNLPQVMWAMSAKVNPKDDVVVIPNLSVLELAPAAQPAGISSKMIIDATTPVAPDVRGNFSTPAKDLPETAEWAARLQRLIAARV.

The Mn(2+) site is built by N161, H182, and E224. Prenylated FMN contacts are provided by residues 161–166 (NVGTYR) and 181–182 (MH). E273 serves as the catalytic Proton donor.

Belongs to the UbiD family. YclC subfamily. It depends on prenylated FMN as a cofactor. Mn(2+) serves as cofactor.

It catalyses the reaction vanillate + H(+) = guaiacol + CO2. Functionally, involved in the non-oxidative decarboxylation and detoxification of phenolic derivatives under both aerobic and anaerobic conditions. Phenolic acid decarboxylase that catalyzes the reversible decarboxylation of vanillate. This is Phenolic acid decarboxylase from Streptomyces sp. (strain D7).